Here is a 579-residue protein sequence, read N- to C-terminus: Multidrug resistance-like ATP-binding protein MdlA (579 aa).

The region spanning 18–303 is the ABC transmembrane type-1 domain; sequence YTIAIFLLIS…FAWMFNIIER (286 aa). 6 consecutive transmembrane segments (helical) span residues 20 to 40, 53 to 73, 134 to 154, 155 to 175, 247 to 267, and 281 to 301; these read IAIFLLISISILQLYPPKLIG, KAPILPLILIILFISIIIYIL, GVLTLVDSLIMGVSVIIVMIT, QISWKLTIISLIPMPIMAIII, IIHLFISISHLLAITIGSYMI, and ILYLGLIIWPMLAFAWMFNII. An ABC transporter domain is found at 338 to 572; the sequence is VKINYFKYSK…LKQWYGKTYL (235 aa). Residue 370–377 coordinates ATP; it reads GPTGSGKS.

It belongs to the ABC transporter superfamily. Drug exporter-2 (TC 3.A.1.117) family.

It is found in the cell membrane. The catalysed reaction is ATP + H2O + xenobioticSide 1 = ADP + phosphate + xenobioticSide 2.. The chain is Multidrug resistance-like ATP-binding protein MdlA (mdlA) from Buchnera aphidicola subsp. Baizongia pistaciae (strain Bp).